We begin with the raw amino-acid sequence, 341 residues long: Protein quaking-A (341 aa).

Positions 87–153 constitute a KH domain; that stretch reads FVPVKEYPDY…WEHLNEDLHV (67 aa). Residues 276-279 carry the SH3-binding motif; the sequence is PPTP. Residues 324–330 carry the Nuclear localization signal motif; sequence RVHPYQR.

Belongs to the quaking family. In terms of assembly, homodimer; does not require RNA to homodimerize.

It localises to the cytoplasm. The protein localises to the nucleus. Functionally, RNA reader protein, which recognizes and binds specific RNAs, thereby regulating RNA metabolic processes, such as pre-mRNA splicing, circular RNA (circRNA) formation, mRNA export, mRNA stability and/or translation. Involved in various cellular processes, such as mRNA storage into stress granules, apoptosis, interferon response, glial cell fate and development. Binds to the 5'-NACUAAY-N(1,20)-UAAY-3' RNA core sequence. Acts as a mRNA modification reader that specifically recognizes and binds mRNA transcripts modified by internal N(7)-methylguanine (m7G). Promotes the formation of circular RNAs (circRNAs): acts by binding to sites flanking circRNA-forming exons. CircRNAs are produced by back-splicing circularization of pre-mRNAs. Required to protect and promote stability of mRNAs which promotes oligodendrocyte differentiation. Acts as an important regulator of muscle development: required during early skeletal myofibril formation by regulating the accumulation of the muscle-specific tropomyosin-3 (tpm3) transcripts. The protein is Protein quaking-A of Danio rerio (Zebrafish).